The primary structure comprises 255 residues: Probable iron chelatin transport ATP-binding protein jhp_0821 (255 aa).

The ABC transporter domain maps to 3 to 240 (LEVKNLSFKY…HNLSALYDTP (238 aa)). Residue 35-42 (APNGSGKT) coordinates ATP.

This sequence belongs to the ABC transporter superfamily.

The protein resides in the cell inner membrane. Part of a binding-protein-dependent transport system for an iron chelatin. Probably responsible for energy coupling to the transport system (Potential). This Helicobacter pylori (strain J99 / ATCC 700824) (Campylobacter pylori J99) protein is Probable iron chelatin transport ATP-binding protein jhp_0821.